The following is a 580-amino-acid chain: Laccase-5 (580 aa).

Residues 1–25 (MDVTKSLLCFISFVAFLLFSSVAEA) form the signal peptide. 2 Plastocyanin-like domains span residues 34–150 (IIQA…PPAG) and 160–312 (RNVP…YKSA). A glycan (N-linked (GlcNAc...) asparagine) is linked at N80. The Cu cation site is built by H84, H86, H129, and H131. 7 N-linked (GlcNAc...) asparagine glycosylation sites follow: N189, N300, N340, N392, N402, N410, and N443. A Plastocyanin-like 3 domain is found at 428-564 (DFPAKPPVKF…AMAFLVENGN (137 aa)). H481, H484, H486, H543, C544, H545, and H549 together coordinate Cu cation.

Belongs to the multicopper oxidase family. It depends on Cu cation as a cofactor. In terms of tissue distribution, ubiquitous and constitutive.

Its subcellular location is the secreted. The protein localises to the extracellular space. It localises to the apoplast. It catalyses the reaction 4 hydroquinone + O2 = 4 benzosemiquinone + 2 H2O. Its function is as follows. Lignin degradation and detoxification of lignin-derived products. This is Laccase-5 (LAC5) from Arabidopsis thaliana (Mouse-ear cress).